Here is a 157-residue protein sequence, read N- to C-terminus: ATP synthase subunit b 1 (157 aa).

The helical transmembrane segment at Leu-7 to Leu-29 threads the bilayer.

Belongs to the ATPase B chain family. As to quaternary structure, F-type ATPases have 2 components, F(1) - the catalytic core - and F(0) - the membrane proton channel. F(1) has five subunits: alpha(3), beta(3), gamma(1), delta(1), epsilon(1). F(0) has three main subunits: a(1), b(2) and c(10-14). The alpha and beta chains form an alternating ring which encloses part of the gamma chain. F(1) is attached to F(0) by a central stalk formed by the gamma and epsilon chains, while a peripheral stalk is formed by the delta and b chains.

It localises to the cell inner membrane. Functionally, f(1)F(0) ATP synthase produces ATP from ADP in the presence of a proton or sodium gradient. F-type ATPases consist of two structural domains, F(1) containing the extramembraneous catalytic core and F(0) containing the membrane proton channel, linked together by a central stalk and a peripheral stalk. During catalysis, ATP synthesis in the catalytic domain of F(1) is coupled via a rotary mechanism of the central stalk subunits to proton translocation. In terms of biological role, component of the F(0) channel, it forms part of the peripheral stalk, linking F(1) to F(0). The protein is ATP synthase subunit b 1 of Methylococcus capsulatus (strain ATCC 33009 / NCIMB 11132 / Bath).